The sequence spans 209 residues: Small ribosomal subunit protein uS3 (209 aa).

Residues 38-107 form the KH type-2 domain; that stretch reads IRKIIKNKYY…RVVINIEEIK (70 aa).

The protein belongs to the universal ribosomal protein uS3 family. Part of the 30S ribosomal subunit. Forms a tight complex with proteins S10 and S14.

Functionally, binds the lower part of the 30S subunit head. Binds mRNA in the 70S ribosome, positioning it for translation. In Thermotoga maritima (strain ATCC 43589 / DSM 3109 / JCM 10099 / NBRC 100826 / MSB8), this protein is Small ribosomal subunit protein uS3.